The sequence spans 188 residues: Large ribosomal subunit protein uL6 (188 aa).

Belongs to the universal ribosomal protein uL6 family. Part of the 50S ribosomal subunit.

In terms of biological role, this protein binds to the 23S rRNA, and is important in its secondary structure. It is located near the subunit interface in the base of the L7/L12 stalk, and near the tRNA binding site of the peptidyltransferase center. In Myxococcus xanthus (strain DK1622), this protein is Large ribosomal subunit protein uL6.